Reading from the N-terminus, the 112-residue chain is Small ribosomal subunit protein uS17 (112 aa).

This sequence belongs to the universal ribosomal protein uS17 family. Part of the 30S ribosomal subunit.

Its function is as follows. One of the primary rRNA binding proteins, it binds specifically to the 5'-end of 16S ribosomal RNA. The polypeptide is Small ribosomal subunit protein uS17 (Haloarcula marismortui (strain ATCC 43049 / DSM 3752 / JCM 8966 / VKM B-1809) (Halobacterium marismortui)).